Here is a 256-residue protein sequence, read N- to C-terminus: Trans-aconitate 2-methyltransferase (256 aa).

This sequence belongs to the methyltransferase superfamily. Tam family.

Its subcellular location is the cytoplasm. The catalysed reaction is trans-aconitate + S-adenosyl-L-methionine = (E)-3-(methoxycarbonyl)pent-2-enedioate + S-adenosyl-L-homocysteine. In terms of biological role, catalyzes the S-adenosylmethionine monomethyl esterification of trans-aconitate. The polypeptide is Trans-aconitate 2-methyltransferase (Rhizobium rhizogenes (strain K84 / ATCC BAA-868) (Agrobacterium radiobacter)).